A 1017-amino-acid chain; its full sequence is Type VI secretion system spike protein VgrG3 (1017 aa).

Residue Asp842 is part of the active site.

It belongs to the VgrG protein family. In terms of assembly, interacts with TsiV3. Interacts with TseL.

The protein resides in the secreted. In terms of biological role, part of the type VI secretion system specialized secretion system, which delivers several virulence factors in both prokaryotic and eukaryotic cells during infection. Forms the spike at the tip of the elongating tube formed by haemolysin co-regulated protein Hcp. Allows the delivery of the TseL antibacterial toxin to target cells where it exerts its toxicity. Additionally, acts directly as an effector and targets the cell wall peptidoglycan layer of prey cells for degradation via its C-terminus. Toxicity is counteracted by a cognate immunity protein TsiV3. The chain is Type VI secretion system spike protein VgrG3 from Vibrio cholerae serotype O1 (strain ATCC 39315 / El Tor Inaba N16961).